The following is an 861-amino-acid chain: MFNRKRRGDFDEDENYRDFRPRMPKRQRIPPVVQLCKEMMPDIRTIGESVKAFEDDIKFLSEAIMNEYGHEDYFNNALLSTLNAVVVEQPQKQAAIALLTMVVNSKNNVAGKSIINYFFEELQKWCKQTYNDEFKSTSNETGPWNKIKLILRFLSILSPMFLVDELINIYKSLFELSIELNNLDPGNRVPLSEAIYTNTLLNIPYLFFFNRNNDGLRTKVEELLAYVEQNYLVKTTDINLLREYNGEPPYEMVELVRVVLPNVKKALINNLEQLNELFPDWNHLLTPQTGDEGFNDALTLPSVDDLKSFVRLNKNFGSVDSMWKTPRYAFHVYLPNSAGNFETVVPISTYAGQLFNDIIIDLVESLEFNRKEVARQVITLDLFFKAGIFTEPGESIAQLIATYEENPLAPTFKIEDLAIETILGLIFKLPSVSQPFAYFYTLLVDICQNSPKAIAPVFGRAFRFFYSHLDSLDFELKLRYLDWFSIQMSNFNFSWKWNEWEDDSIKFGKYFYNPKVNFAKNLIQKELRLTSNFSEVEDSLPQEFTKYLDTSYIPRDQLINYYQSLFTGYTVEEDSVRKNDLYFRQEGVPMENTVRKILDYTHKANNSREVTELESILGELKNEYGSIISDFNRFVIILLVQAVTDSGSRSLSHANKYINDLKEDLKTIFAKIELDIETKEYIIIEAVLTFWNANPQTGFLVADAFKYAGLLTSRTIFTFIFNETGLKNNGLIEATAIEAVFRNLSQQISEENESGNNFEFVFERLCTIANSTIDLLDVNADEDIEIPKVNGEMDIDDIEDDKLDLKWKYFTVIGFIKSILRRYSHEYRELADKFIANIDNAIPHESTRRTISNWIQETKEV.

Residues 22-30 carry the Nuclear localization signal motif; it reads RMPKRQRIP. An MIF4G domain is found at 36 to 264; that stretch reads CKEMMPDIRT…LVRVVLPNVK (229 aa).

The protein belongs to the NCBP1 family. As to quaternary structure, component of the nuclear cap-binding complex (CBC), a heterodimer composed of STO1/CBC1 and CBC2 that interacts with capped RNAs. The complex interacts strongly with the importin subunit alpha SRP1. The SRP1-CBC trimer also binds to capped RNAs, but formation of the importin alpha/beta heterodimer upon binding of KAP95 to SRP1 in the cytoplasm causes dissociation of CBC from the RNA. The CBC complex is part of the commitment complex 1 (CC1), binding to the cap of pre-mRNA and interacting with U1 snRNP subunits MUD2 and SNU56. The CBC complex is part of the NRD1 complex, composed of CBC2, NAB1, NRD1, SEN1 and STO1/CBC2. The CBC complex also interacts with NPL3 and eIF4G (TIF4631 and TIF4632).

The protein localises to the nucleus. It is found in the cytoplasm. It localises to the perinuclear region. Component of the CBC complex, which binds co-transcriptionally to the 5'-cap of pre-mRNAs and is involved in maturation, export and degradation of nuclear mRNAs. The CBC complex is required for efficient pre-mRNA splicing through efficient commitment complex and spliceosome formation. Together with NPL3, the CBC complex is required for export of mRNAs out of the nucleus. The CBC complex is also involved in nuclear mRNA degradation, probably by directing the mRNAs to the sites of degradation. Affects replication of the positive-strand RNA virus BMV. This is Nuclear cap-binding protein complex subunit 1 (STO1) from Saccharomyces cerevisiae (strain ATCC 204508 / S288c) (Baker's yeast).